We begin with the raw amino-acid sequence, 552 residues long: Urocanate hydratase (552 aa).

NAD(+) contacts are provided by residues 49-50, Q127, 173-175, D193, 239-240, 260-264, 270-271, and Y319; these read GG, GMG, NA, QTSAH, and YI. The active site involves C407. G489 serves as a coordination point for NAD(+).

The protein belongs to the urocanase family. It depends on NAD(+) as a cofactor.

Its subcellular location is the cytoplasm. It carries out the reaction 4-imidazolone-5-propanoate = trans-urocanate + H2O. The protein operates within amino-acid degradation; L-histidine degradation into L-glutamate; N-formimidoyl-L-glutamate from L-histidine: step 2/3. Functionally, catalyzes the conversion of urocanate to 4-imidazolone-5-propionate. The sequence is that of Urocanate hydratase from Bacillus thuringiensis (strain Al Hakam).